Here is a 385-residue protein sequence, read N- to C-terminus: Homoserine O-succinyltransferase (385 aa).

In terms of domain architecture, AB hydrolase-1 spans 51 to 360 (NAVLICHALS…DSPHGHDAFL (310 aa)). Ser-157 acts as the Nucleophile in catalysis. Arg-227 is a binding site for substrate. Active-site residues include Asp-323 and His-356. A substrate-binding site is contributed by Asp-357.

Belongs to the AB hydrolase superfamily. MetX family. Homodimer.

Its subcellular location is the cytoplasm. The enzyme catalyses L-homoserine + succinyl-CoA = O-succinyl-L-homoserine + CoA. Its pathway is amino-acid biosynthesis; L-methionine biosynthesis via de novo pathway; O-succinyl-L-homoserine from L-homoserine: step 1/1. Its function is as follows. Transfers a succinyl group from succinyl-CoA to L-homoserine, forming succinyl-L-homoserine. The protein is Homoserine O-succinyltransferase of Hahella chejuensis (strain KCTC 2396).